The following is a 658-amino-acid chain: Glycogen debranching enzyme (658 aa).

D336 (nucleophile) is an active-site residue. Residue E371 is the Proton donor of the active site. A disordered region spans residues E459–G484.

It belongs to the glycosyl hydrolase 13 family.

It carries out the reaction Hydrolysis of (1-&gt;6)-alpha-D-glucosidic linkages to branches with degrees of polymerization of three or four glucose residues in limit dextrin.. The protein operates within glycan degradation; glycogen degradation. Functionally, removes maltotriose and maltotetraose chains that are attached by 1,6-alpha-linkage to the limit dextrin main chain, generating a debranched limit dextrin. This Salmonella enteritidis PT4 (strain P125109) protein is Glycogen debranching enzyme.